Consider the following 635-residue polypeptide: Threonine--tRNA ligase (635 aa).

Residues Met1–Arg144 are editing domain. Positions Pro215–Pro514 are catalytic. Zn(2+)-binding residues include Cys307, His359, and His483.

It belongs to the class-II aminoacyl-tRNA synthetase family. Homodimer. It depends on Zn(2+) as a cofactor.

It localises to the cytoplasm. It carries out the reaction tRNA(Thr) + L-threonine + ATP = L-threonyl-tRNA(Thr) + AMP + diphosphate + H(+). Catalyzes the attachment of threonine to tRNA(Thr) in a two-step reaction: L-threonine is first activated by ATP to form Thr-AMP and then transferred to the acceptor end of tRNA(Thr). Also edits incorrectly charged L-seryl-tRNA(Thr). The sequence is that of Threonine--tRNA ligase from Methanosarcina barkeri (strain Fusaro / DSM 804).